The chain runs to 251 residues: Ubiquinone/menaquinone biosynthesis C-methyltransferase UbiE (251 aa).

S-adenosyl-L-methionine-binding residues include T74, D92, and S132.

It belongs to the class I-like SAM-binding methyltransferase superfamily. MenG/UbiE family.

The catalysed reaction is a 2-demethylmenaquinol + S-adenosyl-L-methionine = a menaquinol + S-adenosyl-L-homocysteine + H(+). It carries out the reaction a 2-methoxy-6-(all-trans-polyprenyl)benzene-1,4-diol + S-adenosyl-L-methionine = a 5-methoxy-2-methyl-3-(all-trans-polyprenyl)benzene-1,4-diol + S-adenosyl-L-homocysteine + H(+). Its pathway is quinol/quinone metabolism; menaquinone biosynthesis; menaquinol from 1,4-dihydroxy-2-naphthoate: step 2/2. It participates in cofactor biosynthesis; ubiquinone biosynthesis. Methyltransferase required for the conversion of demethylmenaquinol (DMKH2) to menaquinol (MKH2) and the conversion of 2-polyprenyl-6-methoxy-1,4-benzoquinol (DDMQH2) to 2-polyprenyl-3-methyl-6-methoxy-1,4-benzoquinol (DMQH2). The sequence is that of Ubiquinone/menaquinone biosynthesis C-methyltransferase UbiE from Rubrivivax gelatinosus (strain NBRC 100245 / IL144).